A 715-amino-acid chain; its full sequence is Protein DENND6 homolog (715 aa).

Residues 13–58 (MIFKEEEIKKQQILLEKEEKEKQEQQQKKLNKDNIFKLEEEGKKLE) are a coiled coil. One can recognise a uDENN domain in the interval 96–273 (NSFCIINFDL…VKQHQLGGGS (178 aa)). 2 disordered regions span residues 269-296 (LGGGSGGGLSSSPSSSSGGGNIPTSNTT) and 392-416 (SGTRPDDSNNNNNQDDSEYNNNNNN). A cDENN domain is found at 299-476 (SPSIWSEMKL…KDLLTRHVLD (178 aa)). Over residues 399-416 (SNNNNNQDDSEYNNNNNN) the composition is skewed to low complexity. The region spanning 478–600 (KEKILSEYKP…KQWLDDKRAQ (123 aa)) is the dDENN domain.

This sequence belongs to the DENND6 family.

In Dictyostelium discoideum (Social amoeba), this protein is Protein DENND6 homolog.